Here is a 269-residue protein sequence, read N- to C-terminus: Signal recognition particle SEC65 subunit (269 aa).

2 disordered regions span residues 30 to 65 (RTPI…DKSV) and 236 to 269 (PMTK…KIRG). Over residues 248–258 (QPQVKAPQAPK) the composition is skewed to low complexity. Basic residues predominate over residues 259-269 (QPKKKVMKIRG).

It belongs to the SRP19 family. As to quaternary structure, fungal signal recognition particle consists of a 7S RNA molecule (scR1) and at least six protein subunits: SRP72, SRP68, SRP54, SEC65, SRP21 andSRP14.

It localises to the cytoplasm. In terms of biological role, signal-recognition-particle assembly has a crucial role in targeting secretory proteins to the rough endoplasmic reticulum membrane. It must be involved intimately in the translocation of a wide variety of protein substrates. This chain is Signal recognition particle SEC65 subunit (SEC65), found in Debaryomyces hansenii (strain ATCC 36239 / CBS 767 / BCRC 21394 / JCM 1990 / NBRC 0083 / IGC 2968) (Yeast).